A 402-amino-acid chain; its full sequence is Speedy protein E2 (402 aa).

Residues 1-89 (MDRTETRFRK…EEPEKELAPE (89 aa)) are disordered. Positions 16–39 (GKITTSRQPHPQNEQSPQRSTSGY) are enriched in polar residues. Residues 76-89 (DESEEEPEKELAPE) show a composition bias toward acidic residues.

Belongs to the Speedy/Ringo family.

The chain is Speedy protein E2 (SPDYE2) from Homo sapiens (Human).